A 1220-amino-acid chain; its full sequence is Limbin (1220 aa).

An N-terminal signal peptide occupies residues 1-29; it reads MGATGPTGAGGRATWVLAGNILAAALVLG. The Extracellular segment spans residues 30-210; that stretch reads SGPRALPPSF…VLPNHGLHAA (181 aa). Residues 38–59 are disordered; that stretch reads SFPALGPGSPSRPGPAGPWASS. 3 N-linked (GlcNAc...) asparagine glycosylation sites follow: N100, N109, and N130. The chain crosses the membrane as a helical span at residues 211 to 231; the sequence is GFIAAFLISLLLTVAALFFLA. Residues 232–1220 are Cytoplasmic-facing; that stretch reads RGRCLQGGML…KKANRALGLD (989 aa). Coiled-coil stretches lie at residues 355–404, 563–644, 854–875, and 920–1005; these read EEYE…SAAE, KQKL…AALD, GELL…AESL, and QILE…VREE.

In terms of assembly, component of the EvC complex composed of EFCAB7, IQCE, EVC2 and EVC; built from two subcomplexes, EVC2:EVC and EFCAB7:IQCE. Interacts with EVC. Interacts (via N-terminal end) with EFCAB7. Interacts (via N-terminal end) with IQCE. As to expression, expressed in long and cranial bones, kidney and heart. Strongly expressed in proliferating chondrocytes, osteoblasts and osteoclasts.

It localises to the cell membrane. The protein resides in the cytoplasm. The protein localises to the cytoskeleton. It is found in the cilium basal body. Its subcellular location is the cell projection. It localises to the cilium. The protein resides in the cilium membrane. The protein localises to the nucleus. Functionally, component of the EvC complex that positively regulates ciliary Hedgehog (Hh) signaling. Plays a critical role in bone formation and skeletal development. May be involved in early embryonic morphogenesis. The sequence is that of Limbin (Evc2) from Mus musculus (Mouse).